Here is a 173-residue protein sequence, read N- to C-terminus: RNA pyrophosphohydrolase (173 aa).

A Nudix hydrolase domain is found at 6–149 (GFRANVGIIL…KRGVYRRALQ (144 aa)). Residues 38–59 (GGIDRGETPMDAMYRELWEEVG) carry the Nudix box motif.

Belongs to the Nudix hydrolase family. RppH subfamily. The cofactor is a divalent metal cation.

In terms of biological role, accelerates the degradation of transcripts by removing pyrophosphate from the 5'-end of triphosphorylated RNA, leading to a more labile monophosphorylated state that can stimulate subsequent ribonuclease cleavage. The chain is RNA pyrophosphohydrolase from Psychrobacter arcticus (strain DSM 17307 / VKM B-2377 / 273-4).